Reading from the N-terminus, the 674-residue chain is Slender lobes-like protein (674 aa).

Disordered stretches follow at residues 65–137, 168–321, and 352–382; these read LEKS…NASK, NELN…TIKK, and QKSR…RVEV. The segment covering 73-97 has biased composition (basic residues); it reads PKKKVQTKKHLPPVRKKDSVKRRRI. Residues 127–137 are compositionally biased toward polar residues; that stretch reads NQSNCSSNASK. Residues 216-228 show a composition bias toward acidic residues; that stretch reads VDSDDEEEQDQDQ. Over residues 233 to 245 the composition is skewed to basic and acidic residues; the sequence is KPAESENHSEIKK. Ser248 carries the post-translational modification Phosphoserine. Residues 272-312 show a composition bias toward basic and acidic residues; that stretch reads EDPKEAGKNEESDKDKPAENGKSDKDKQAETEMSDEDKPSE. Ser358 and Ser391 each carry phosphoserine. Disordered stretches follow at residues 395-585 and 618-659; these read MVAE…AGYV and KYFR…NSAK. The segment covering 400 to 410 has biased composition (basic residues); it reads KRQKNKRKRLS. Phosphoserine is present on Ser414. Over residues 548-558 the composition is skewed to basic residues; it reads AKQKKKGKKKQ.

The sequence is that of Slender lobes-like protein from Drosophila melanogaster (Fruit fly).